The chain runs to 143 residues: Mediator of RNA polymerase II transcription subunit 22 (143 aa).

The protein belongs to the Mediator complex subunit 22 family. In terms of assembly, component of the Mediator complex, which includes at least CDK8, MED4, MED6, MED11, MED14, MED17, MED18, MED20, MED21, MED22, MED27, MED28, MED30 and MED31.

It localises to the nucleus. Component of the Mediator complex, a coactivator involved in the regulated transcription of nearly all RNA polymerase II-dependent genes. Mediator functions as a bridge to convey information from gene-specific regulatory proteins to the basal RNA polymerase II transcription machinery. Mediator is recruited to promoters by direct interactions with regulatory proteins and serves as a scaffold for the assembly of a functional preinitiation complex with RNA polymerase II and the general transcription factors. This Drosophila melanogaster (Fruit fly) protein is Mediator of RNA polymerase II transcription subunit 22 (MED22).